An 856-amino-acid chain; its full sequence is Protein translocase subunit SecA (856 aa).

ATP-binding positions include glutamine 77, glycine 95–threonine 99, and aspartate 534.

The protein belongs to the SecA family. In terms of assembly, monomer and homodimer. Part of the essential Sec protein translocation apparatus which comprises SecA, SecYEG and auxiliary proteins SecDF. Other proteins may also be involved.

It is found in the cell inner membrane. Its subcellular location is the cytoplasm. The catalysed reaction is ATP + H2O + cellular proteinSide 1 = ADP + phosphate + cellular proteinSide 2.. Part of the Sec protein translocase complex. Interacts with the SecYEG preprotein conducting channel. Has a central role in coupling the hydrolysis of ATP to the transfer of proteins into and across the cell membrane, serving as an ATP-driven molecular motor driving the stepwise translocation of polypeptide chains across the membrane. The protein is Protein translocase subunit SecA of Thermosipho africanus (strain TCF52B).